The following is a 477-amino-acid chain: MFKQILGKLPKKTSAKFWDNGESQTLDNNNNQGGGDEVLSQRTSSNGDTSLDCVSSFDVLPRLRDVSISEKQELFLKKLRLCCLVFDFVAEPQQNFKEKEIKRQTLLEVVDYVISSGNGKFPESVIQEATKMISANLFSNPHRQWKNKTPEALDLEEEEGSLNPSWPHLQIVYEFLLRIVASPNTDPKISKKYIDHTFVLKLLDLFDSEDPREREYLKTILHRIYGRFMVHRPFIRKTMNNILYDFIFETGKHSGIAEFLEVLGSIINGFALPLKEEHKLFLTRVLIPLHKLKCLPNYHQQLSYCVIQFVEKDCKLADTVIRGMLKYWPVTNSAKEIMFLNELEEILEATQLTEFERCMVPLSRQIAQCLSSSHFQVAERALYLWNNDHVTNLVRQNSRIILPIVFPALEKNGSSHWNQAVKNLTENVLKVLSDTNPDLFEECLHKFQEDQQKAEDTKKKNGETWRQLEEIVASMAK.

The protein belongs to the phosphatase 2A regulatory subunit B56 family. As to quaternary structure, PP2A consists of a common heteromeric enzyme, composed of a catalytic subunit (subunits C), a constant regulatory subunit (subunit A), and a variety of regulatory subunits such as subunits B (the R2/B/PR55/B55, R3/B''/PR72/PR130/PR59 and R5/B'/B56 families). Interacts with SRK2E/OST1. Expressed ubiquitously.

The protein resides in the cytoplasm. The B regulatory subunit may modulate substrate selectivity and catalytic activity, and may also direct the localization of the catalytic enzyme to a particular subcellular compartment. In Arabidopsis thaliana (Mouse-ear cress), this protein is Serine/threonine protein phosphatase 2A 55 kDa regulatory subunit B' delta isoform (B'DELTA).